Here is a 583-residue protein sequence, read N- to C-terminus: Undecaprenyl phosphate-alpha-4-amino-4-deoxy-L-arabinose arabinosyl transferase 2 (583 aa).

The tract at residues 1–20 (MTSRIQMHRTSPPPAYGTSA) is disordered. The next 12 helical transmembrane spans lie at 42 to 62 (LLLV…GLWI), 113 to 135 (LFGV…YLIT), 145 to 165 (SFAA…AGYS), 166 to 186 (NLDP…WFAL), 209 to 229 (FMTK…PYMI), 241 to 261 (GLVA…SIHA), 290 to 310 (WWFY…LLPG), 321 to 341 (QAPT…FSLS), 345 to 365 (LPTY…SALI), 380 to 400 (SLLN…IQLT), 409 to 429 (MLGL…NLLP), and 440 to 460 (PALG…GFIV).

This sequence belongs to the glycosyltransferase 83 family.

Its subcellular location is the cell inner membrane. It catalyses the reaction 4-amino-4-deoxy-alpha-L-arabinopyranosyl di-trans,octa-cis-undecaprenyl phosphate + lipid IVA = lipid IIA + di-trans,octa-cis-undecaprenyl phosphate.. It participates in lipopolysaccharide metabolism; 4-amino-4-deoxy-beta-L-arabinose-lipid A biosynthesis. Functionally, catalyzes the transfer of the L-Ara4N moiety of the glycolipid undecaprenyl phosphate-alpha-L-Ara4N to lipid A. The modified arabinose is attached to lipid A and is required for resistance to polymyxin and cationic antimicrobial peptides. This is Undecaprenyl phosphate-alpha-4-amino-4-deoxy-L-arabinose arabinosyl transferase 2 from Pseudomonas fluorescens (strain ATCC BAA-477 / NRRL B-23932 / Pf-5).